The chain runs to 373 residues: tRNA 2-selenouridine synthase (373 aa).

The 125-residue stretch at 12-136 (FINDRPMMDA…MRGFLLETTE (125 aa)) folds into the Rhodanese domain. C95 functions as the S-selanylcysteine intermediate in the catalytic mechanism.

It belongs to the SelU family. In terms of assembly, monomer.

The enzyme catalyses 5-methylaminomethyl-2-thiouridine(34) in tRNA + selenophosphate + (2E)-geranyl diphosphate + H2O + H(+) = 5-methylaminomethyl-2-selenouridine(34) in tRNA + (2E)-thiogeraniol + phosphate + diphosphate. The catalysed reaction is 5-methylaminomethyl-2-thiouridine(34) in tRNA + (2E)-geranyl diphosphate = 5-methylaminomethyl-S-(2E)-geranyl-thiouridine(34) in tRNA + diphosphate. It catalyses the reaction 5-methylaminomethyl-S-(2E)-geranyl-thiouridine(34) in tRNA + selenophosphate + H(+) = 5-methylaminomethyl-2-(Se-phospho)selenouridine(34) in tRNA + (2E)-thiogeraniol. It carries out the reaction 5-methylaminomethyl-2-(Se-phospho)selenouridine(34) in tRNA + H2O = 5-methylaminomethyl-2-selenouridine(34) in tRNA + phosphate. Its function is as follows. Involved in the post-transcriptional modification of the uridine at the wobble position (U34) of tRNA(Lys), tRNA(Glu) and tRNA(Gln). Catalyzes the conversion of 2-thiouridine (S2U-RNA) to 2-selenouridine (Se2U-RNA). Acts in a two-step process involving geranylation of 2-thiouridine (S2U) to S-geranyl-2-thiouridine (geS2U) and subsequent selenation of the latter derivative to 2-selenouridine (Se2U) in the tRNA chain. The protein is tRNA 2-selenouridine synthase of Ectopseudomonas mendocina (strain ymp) (Pseudomonas mendocina).